The chain runs to 131 residues: Translation initiation factor 5A (131 aa).

Hypusine is present on K36.

Belongs to the eIF-5A family. In terms of processing, the N-terminus is blocked.

It localises to the cytoplasm. Its function is as follows. Functions by promoting the formation of the first peptide bond. The polypeptide is Translation initiation factor 5A (eif5a) (Sulfolobus acidocaldarius (strain ATCC 33909 / DSM 639 / JCM 8929 / NBRC 15157 / NCIMB 11770)).